The chain runs to 183 residues: Inosine triphosphate pyrophosphatase (183 aa).

Position 8–13 (8–13 (TGNKNK)) interacts with ITP. Position 36 (glutamate 36) interacts with Mg(2+). ITP-binding positions include lysine 48, 64-65 (DT), lysine 81, 140-143 (FGWD), lysine 161, and 166-167 (HR).

Belongs to the HAM1 NTPase family. As to quaternary structure, homodimer. Requires Mg(2+) as cofactor. Mn(2+) serves as cofactor.

Its subcellular location is the cytoplasm. It is found in the nucleus. It carries out the reaction ITP + H2O = IMP + diphosphate + H(+). The catalysed reaction is dITP + H2O = dIMP + diphosphate + H(+). It catalyses the reaction XTP + H2O = XMP + diphosphate + H(+). In terms of biological role, pyrophosphatase that hydrolyzes non-canonical purine nucleotides such as inosine triphosphate (ITP), deoxyinosine triphosphate (dITP) or xanthosine 5'-triphosphate (XTP) to their respective monophosphate derivatives. The enzyme does not distinguish between the deoxy- and ribose forms. Probably excludes non-canonical purines from RNA and DNA precursor pools, thus preventing their incorporation into RNA and DNA and avoiding chromosomal lesions. In Ajellomyces capsulatus (strain G186AR / H82 / ATCC MYA-2454 / RMSCC 2432) (Darling's disease fungus), this protein is Inosine triphosphate pyrophosphatase.